Consider the following 87-residue polypeptide: MSFLDSLFGKRQRSSDIARDRLLTVLVHDRVKLTPDMMEQLKAELSTVIARYVPSVDAGAIEVTLMRGEAVDHLKADIPLRRTSQKL.

The protein belongs to the MinE family.

Functionally, prevents the cell division inhibition by proteins MinC and MinD at internal division sites while permitting inhibition at polar sites. This ensures cell division at the proper site by restricting the formation of a division septum at the midpoint of the long axis of the cell. This Roseiflexus castenholzii (strain DSM 13941 / HLO8) protein is Cell division topological specificity factor.